A 317-amino-acid polypeptide reads, in one-letter code: Acetyl-coenzyme A carboxylase carboxyl transferase subunit alpha (317 aa).

Residues 40–293 form the CoA carboxyltransferase C-terminal domain; it reads LEVRVREAIL…GDVIANALAE (254 aa).

Belongs to the AccA family. Acetyl-CoA carboxylase is a heterohexamer composed of biotin carboxyl carrier protein (AccB), biotin carboxylase (AccC) and two subunits each of ACCase subunit alpha (AccA) and ACCase subunit beta (AccD).

Its subcellular location is the cytoplasm. It catalyses the reaction N(6)-carboxybiotinyl-L-lysyl-[protein] + acetyl-CoA = N(6)-biotinyl-L-lysyl-[protein] + malonyl-CoA. Its pathway is lipid metabolism; malonyl-CoA biosynthesis; malonyl-CoA from acetyl-CoA: step 1/1. Its function is as follows. Component of the acetyl coenzyme A carboxylase (ACC) complex. First, biotin carboxylase catalyzes the carboxylation of biotin on its carrier protein (BCCP) and then the CO(2) group is transferred by the carboxyltransferase to acetyl-CoA to form malonyl-CoA. This Rhizobium etli (strain CIAT 652) protein is Acetyl-coenzyme A carboxylase carboxyl transferase subunit alpha.